Reading from the N-terminus, the 1105-residue chain is Protein phosphatase 1 regulatory subunit 26 (1105 aa).

Disordered stretches follow at residues 228–382 (LNDK…NKLA), 444–468 (QSTY…DSLV), 504–526 (TSPE…AKAM), and 589–748 (LNRG…DSDD). Positions 275 to 285 (LLRKHASDSKL) are enriched in basic and acidic residues. Positions 306-317 (TKTSSPSPKSTP) are enriched in low complexity. The span at 359 to 368 (SPTSANSLTH) shows a compositional bias: polar residues. Over residues 451 to 460 (TEPPPPPPEP) the composition is skewed to pro residues. Residues 504–516 (TSPELGSQSSKLS) show a composition bias toward polar residues. The span at 602 to 612 (SYSSGDKSSSL) shows a compositional bias: low complexity. Residues 628–647 (SKRKYKKRPKDGKSQCKKRV) show a composition bias toward basic residues. Basic and acidic residues predominate over residues 686–701 (NSLEKSKKRREEKAVE). Residues 705 to 715 (PSCSSSPQGNK) are compositionally biased toward polar residues. Residues 733–742 (RALDDAHESS) are compositionally biased toward basic and acidic residues.

It is found in the nucleus. The protein localises to the nucleolus. Functionally, may inhibit phosphatase activity of protein phosphatase 1 (PP1) complexes. May positively regulate cell proliferation. This is Protein phosphatase 1 regulatory subunit 26 (ppp1r26) from Xenopus laevis (African clawed frog).